A 95-amino-acid polypeptide reads, in one-letter code: Large ribosomal subunit protein bL27 (95 aa).

Positions 1–6 are excised as a propeptide; sequence MILQLF.

It belongs to the bacterial ribosomal protein bL27 family. Post-translationally, the N-terminus is cleaved by ribosomal processing cysteine protease Prp.

In Caldanaerobacter subterraneus subsp. tengcongensis (strain DSM 15242 / JCM 11007 / NBRC 100824 / MB4) (Thermoanaerobacter tengcongensis), this protein is Large ribosomal subunit protein bL27.